Consider the following 335-residue polypeptide: MNEYIKGLPKAELHLHIEGTLEPEMMIDIGKRNGVPLPYPDAEAAREAYAFKDLQSFLDIYYQAASVLLCEQDFYDLTMAYLKKARSQNVRHAEIFFDPQTHTSRGIAFDTVITGINNALRDGEQNLGITSKLIMCILRHLSQDEGLKTLEQALEYKGVIAGIGLDSSELGNPPDKFRSLYERAHKEGFLTVAHAGEEGHADYIWQALNTLHVARIDHGVHCMEDETLIHTLVERQIPLTVCPLSNVRLGVFSSMEEHNLKKMLDRELSVTVNSDDPAYFGGYVNENYLAVQQALTLERKDLVRLAVNSFTASFLTQEKKQQHIAAIHTFDKNIT.

Zn(2+)-binding residues include His14, His16, and His194. Glu197 (proton donor) is an active-site residue. Asp275 contributes to the Zn(2+) binding site. Asp276 contacts substrate.

Belongs to the metallo-dependent hydrolases superfamily. Adenosine and AMP deaminases family. Adenine deaminase type 2 subfamily. Requires Zn(2+) as cofactor.

The catalysed reaction is adenine + H2O + H(+) = hypoxanthine + NH4(+). Functionally, catalyzes the hydrolytic deamination of adenine to hypoxanthine. Plays an important role in the purine salvage pathway and in nitrogen catabolism. This Chlorobium phaeobacteroides (strain BS1) protein is Adenine deaminase.